We begin with the raw amino-acid sequence, 221 residues long: Histone H1.3 (221 aa).

Residues 1 to 17 (MSETAPLAPTIPAPAEK) are compositionally biased toward low complexity. Positions 1–43 (MSETAPLAPTIPAPAEKTPVKKKAKKAGATAGKRKASGPPVSE) are disordered. An N-acetylserine modification is found at Ser-2. Position 2 is a phosphoserine (Ser-2). Lys-17 bears the N6-acetyllysine mark. A Phosphothreonine modification is found at Thr-18. Over residues 20–36 (VKKKAKKAGATAGKRKA) the composition is skewed to basic residues. 3 positions are modified to N6-(beta-hydroxybutyryl)lysine: Lys-35, Lys-47, and Lys-53. An H15 domain is found at 37–110 (SGPPVSELIT…GASGSFKLNK (74 aa)). Position 55 is a citrulline (Arg-55). N6-(beta-hydroxybutyryl)lysine is present on residues Lys-65, Lys-76, Lys-86, and Lys-91. A disordered region spans residues 90–221 (SKGTLVQTKG…KAKKAAPKKK (132 aa)). At Ser-105 the chain carries Phosphoserine; by PKC. Residue Lys-107 is modified to N6-(beta-hydroxybutyryl)lysine. Basic residues-rich tracts occupy residues 120-141 (KAKKAGAAKPRKPAGAAKKPKK), 150-161 (KSIKKTPKKVKK), and 170-179 (KVAKSAKKVK). Lys-170 is modified (N6-(beta-hydroxybutyryl)lysine). Over residues 180-193 (TPQPKKAAKSPAKA) the composition is skewed to low complexity. Basic residues predominate over residues 194-221 (KAPKPKAAKPKSGKPKVTKAKKAAPKKK).

It belongs to the histone H1/H5 family. Post-translationally, H1 histones are progressively phosphorylated during the cell cycle, becoming maximally phosphorylated during late G2 phase and M phase, and being dephosphorylated sharply thereafter. In terms of processing, citrullination at Arg-55 (H1R54ci) by PADI4 takes place within the DNA-binding site of H1 and results in its displacement from chromatin and global chromatin decondensation, thereby promoting pluripotency and stem cell maintenance.

The protein localises to the nucleus. It localises to the chromosome. Histone H1 protein binds to linker DNA between nucleosomes forming the macromolecular structure known as the chromatin fiber. Histones H1 are necessary for the condensation of nucleosome chains into higher-order structured fibers. Also acts as a regulator of individual gene transcription through chromatin remodeling, nucleosome spacing and DNA methylation. The protein is Histone H1.3 of Homo sapiens (Human).